The primary structure comprises 262 residues: Insulin-like growth factor-binding protein 1 (262 aa).

Positions 1–25 are cleaved as a signal peptide; it reads MPEVPAVRAWPLLLSLALQLGAAAG. In terms of domain architecture, IGFBP N-terminal spans 28-108; sequence QPLHCAPCSA…TRGQGACMPA (81 aa). 6 disulfides stabilise this stretch: Cys-32–Cys-59, Cys-35–Cys-61, Cys-43–Cys-62, Cys-50–Cys-65, Cys-72–Cys-85, and Cys-79–Cys-105. The interval 101 to 133 is disordered; sequence GQGACMPAPSAEATETKDPAAPETTSPESTEMT. Over residues 121 to 131 the composition is skewed to low complexity; sequence APETTSPESTE. A phosphoserine mark is found at Ser-126, Ser-129, and Ser-147. Phosphotyrosine is present on Tyr-161. Residues 176-254 form the Thyroglobulin type-1 domain; that stretch reads KEPCQRELYK…STAVRGDPKC (79 aa). 3 disulfide bridges follow: Cys-179-Cys-209, Cys-220-Cys-231, and Cys-233-Cys-254. Ser-245 carries the post-translational modification Phosphoserine. A Cell attachment site motif is present at residues 249–251; sequence RGD.

In terms of assembly, binds equally well IGF1 and IGF2. Interacts with integrin ITGA5:ITGB1. Interacts with VHL; this interaction inhibits HIF1A degradation.

Its subcellular location is the secreted. Functionally, multifunctional protein that plays a critical role in regulating the availability of IGFs such as IGF1 and IGF2 to their receptors and thereby regulates IGF-mediated cellular processes including cell migration, proliferation, differentiation or apoptosis in a cell-type specific manner. Also plays a positive role in cell migration by interacting with integrin ITGA5:ITGB1 through its RGD motif. Mechanistically, binding to integrins leads to activation of focal adhesion kinase/PTK2 and stimulation of the mitogen-activated protein kinase (MAPK) pathway. Regulates cardiomyocyte apoptosis by suppressing HIF-1alpha/HIF1A degradation through ubiquitination. In Sus scrofa (Pig), this protein is Insulin-like growth factor-binding protein 1 (IGFBP1).